A 781-amino-acid chain; its full sequence is Tax1-binding protein 1 homolog A (781 aa).

Coiled-coil stretches lie at residues 148–453 and 488–581; these read NSDI…QGDA and DVEK…YMRE. The span at 441-465 shows a compositional bias: polar residues; sequence KLTQQQETQQGDANRNDASTETTLE. 2 disordered regions span residues 441-510 and 630-691; these read KLTQ…EEEC and ETRD…EAPA. The span at 484 to 495 shows a compositional bias: basic and acidic residues; sequence TVARDVEKSRDE. Residues 496–510 are compositionally biased toward acidic residues; the sequence is EGNEQEEEDEEEEEC. Positions 646 to 656 are enriched in pro residues; it reads RPPPLAPPPWG. 2 UBZ1-type zinc fingers span residues 716–742 and 743–769; these read HKQC…VESH and WRVC…VHTH. Residues cysteine 719, cysteine 722, histidine 738, histidine 742, cysteine 746, cysteine 749, histidine 765, and histidine 769 each coordinate Zn(2+).

In terms of tissue distribution, little expression is observed during pectoral fin development, except for an elevated level of expression in the distal mesenchyme cells of some samples.

Functionally, may have anti-apoptotic activity. The protein is Tax1-binding protein 1 homolog A of Danio rerio (Zebrafish).